The primary structure comprises 230 residues: Cytidylate kinase (230 aa).

ATP is bound at residue 12 to 20; the sequence is GPSGAGKST.

This sequence belongs to the cytidylate kinase family. Type 1 subfamily.

The protein localises to the cytoplasm. The catalysed reaction is CMP + ATP = CDP + ADP. It catalyses the reaction dCMP + ATP = dCDP + ADP. The chain is Cytidylate kinase from Corynebacterium diphtheriae (strain ATCC 700971 / NCTC 13129 / Biotype gravis).